A 515-amino-acid chain; its full sequence is Anthranilate synthase component 1 (515 aa).

L-tryptophan contacts are provided by residues Ser50 and 281 to 283 (PYM). Position 316-317 (316-317 (GT)) interacts with chorismate. Glu343 provides a ligand contact to Mg(2+). Residues Tyr431, Arg451, 465-467 (GAG), and Gly467 contribute to the chorismate site. Glu480 is a binding site for Mg(2+).

The protein belongs to the anthranilate synthase component I family. In terms of assembly, heterotetramer consisting of two non-identical subunits: a beta subunit (TrpG) and a large alpha subunit (TrpE). Mg(2+) is required as a cofactor.

It catalyses the reaction chorismate + L-glutamine = anthranilate + pyruvate + L-glutamate + H(+). It functions in the pathway amino-acid biosynthesis; L-tryptophan biosynthesis; L-tryptophan from chorismate: step 1/5. Its activity is regulated as follows. Feedback inhibited by tryptophan. In terms of biological role, part of a heterotetrameric complex that catalyzes the two-step biosynthesis of anthranilate, an intermediate in the biosynthesis of L-tryptophan. In the first step, the glutamine-binding beta subunit (TrpG) of anthranilate synthase (AS) provides the glutamine amidotransferase activity which generates ammonia as a substrate that, along with chorismate, is used in the second step, catalyzed by the large alpha subunit of AS (TrpE) to produce anthranilate. In the absence of TrpG, TrpE can synthesize anthranilate directly from chorismate and high concentrations of ammonia. The protein is Anthranilate synthase component 1 (trpE) of Bacillus subtilis (strain 168).